Consider the following 154-residue polypeptide: Large ribosomal subunit protein uL22c (154 aa).

This sequence belongs to the universal ribosomal protein uL22 family. As to quaternary structure, part of the 50S ribosomal subunit.

The protein localises to the plastid. It is found in the chloroplast. Its function is as follows. This protein binds specifically to 23S rRNA. The globular domain of the protein is located near the polypeptide exit tunnel on the outside of the subunit, while an extended beta-hairpin is found that lines the wall of the exit tunnel in the center of the 70S ribosome. The chain is Large ribosomal subunit protein uL22c (rpl22) from Helianthus annuus (Common sunflower).